Consider the following 152-residue polypeptide: Transcriptional regulator MraZ (152 aa).

SpoVT-AbrB domains lie at 5–52 and 81–124; these read ATMV…PLPE and ASEC…DEQT.

It belongs to the MraZ family. In terms of assembly, forms oligomers.

Its subcellular location is the cytoplasm. The protein localises to the nucleoid. Functionally, negatively regulates its own expression and that of the subsequent genes in the proximal part of the division and cell wall (dcw) gene cluster. Acts by binding directly to DNA. May also regulate the expression of genes outside the dcw cluster. This Yersinia pseudotuberculosis serotype O:1b (strain IP 31758) protein is Transcriptional regulator MraZ.